A 922-amino-acid polypeptide reads, in one-letter code: Isoleucine--tRNA ligase (922 aa).

A 'HIGH' region motif is present at residues 58–68; that stretch reads PYANGDIHIGH. Glu-552 is a binding site for L-isoleucyl-5'-AMP. A 'KMSKS' region motif is present at residues 593 to 597; it reads KMSKS. Lys-596 is a binding site for ATP. The Zn(2+) site is built by Cys-885, Cys-888, Cys-905, and Cys-908.

It belongs to the class-I aminoacyl-tRNA synthetase family. IleS type 1 subfamily. In terms of assembly, monomer. Requires Zn(2+) as cofactor.

The protein localises to the cytoplasm. The enzyme catalyses tRNA(Ile) + L-isoleucine + ATP = L-isoleucyl-tRNA(Ile) + AMP + diphosphate. Its function is as follows. Catalyzes the attachment of isoleucine to tRNA(Ile). As IleRS can inadvertently accommodate and process structurally similar amino acids such as valine, to avoid such errors it has two additional distinct tRNA(Ile)-dependent editing activities. One activity is designated as 'pretransfer' editing and involves the hydrolysis of activated Val-AMP. The other activity is designated 'posttransfer' editing and involves deacylation of mischarged Val-tRNA(Ile). This is Isoleucine--tRNA ligase from Ruthia magnifica subsp. Calyptogena magnifica.